The sequence spans 119 residues: Large ribosomal subunit protein bL20 (119 aa).

This sequence belongs to the bacterial ribosomal protein bL20 family.

Binds directly to 23S ribosomal RNA and is necessary for the in vitro assembly process of the 50S ribosomal subunit. It is not involved in the protein synthesizing functions of that subunit. In Delftia acidovorans (strain DSM 14801 / SPH-1), this protein is Large ribosomal subunit protein bL20.